Consider the following 860-residue polypeptide: Probable leucine--tRNA ligase, cytoplasmic (860 aa).

A 'HIGH' region motif is present at residues 41 to 51; that stretch reads PYMNGKLHLGH. A 'KMSKS' region motif is present at residues 552-556; sequence KMSKS. Lys-555 is an ATP binding site.

The protein belongs to the class-I aminoacyl-tRNA synthetase family.

It is found in the cytoplasm. It catalyses the reaction tRNA(Leu) + L-leucine + ATP = L-leucyl-tRNA(Leu) + AMP + diphosphate. The protein is Probable leucine--tRNA ligase, cytoplasmic of Enterocytozoon bieneusi (strain H348) (Microsporidian parasite).